Consider the following 228-residue polypeptide: UPF0758 protein Reut_A2732 (228 aa).

An MPN domain is found at 102 to 224 (GLDSPAAVRS…VHSFAEHGEL (123 aa)). Zn(2+)-binding residues include His173, His175, and Asp186. Positions 173-186 (HNHPSGCCTPSQSD) match the JAMM motif motif.

This sequence belongs to the UPF0758 family.

In Cupriavidus pinatubonensis (strain JMP 134 / LMG 1197) (Cupriavidus necator (strain JMP 134)), this protein is UPF0758 protein Reut_A2732.